The chain runs to 612 residues: Lipoma-preferred partner (612 aa).

Disordered regions lie at residues 1-118 (MSHP…SSLD) and 132-219 (ECSS…SSRP). Positions 26–40 (THSFGNPSISVSTQQ) are enriched in polar residues. Over residues 41-53 (PPKKFAPVVAPKP) the composition is skewed to low complexity. The residue at position 108 (Lys108) is an N6-acetyllysine. 2 positions are modified to phosphoserine: Ser116 and Ser151. Polar residues-rich tracts occupy residues 143 to 158 (QSSTGSTASPPVSTPV) and 171 to 181 (PLTATKKSTLK). Positions 183-193 (QPAPQAGPIPV) are enriched in pro residues. Over residues 209–219 (SYTTASTSSRP) the composition is skewed to polar residues. 2 positions are modified to phosphotyrosine: Tyr244 and Tyr301. Residues 307–387 (YGGRNDSDPT…LGPSSVAPSF (81 aa)) are disordered. Polar residues predominate over residues 314-323 (DPTYGQQGHP). Lys327 participates in a covalent cross-link: Glycyl lysine isopeptide (Lys-Gly) (interchain with G-Cter in SUMO1). Thr333 is subject to Phosphothreonine. Ser375 carries the post-translational modification Phosphoserine. 3 consecutive LIM zinc-binding domains span residues 414–473 (GRCA…INTL), 474–534 (EQCN…KFAP), and 535–603 (RCSV…RIRV).

Belongs to the zyxin/ajuba family. In terms of assembly, interacts with VASP, with PDZ domains of SCRIB and with ACTN1/alpha-actinin. In terms of tissue distribution, expressed in a wide variety of tissues but no or very low expression in brain and peripheral leukocytes.

The protein localises to the nucleus. Its subcellular location is the cytoplasm. The protein resides in the cell junction. It localises to the cell membrane. May play a structural role at sites of cell adhesion in maintaining cell shape and motility. In addition to these structural functions, it may also be implicated in signaling events and activation of gene transcription. May be involved in signal transduction from cell adhesion sites to the nucleus allowing successful integration of signals arising from soluble factors and cell-cell adhesion sites. Also suggested to serve as a scaffold protein upon which distinct protein complexes are assembled in the cytoplasm and in the nucleus. The sequence is that of Lipoma-preferred partner (LPP) from Homo sapiens (Human).